The following is an 871-amino-acid chain: Espin (871 aa).

9 ANK repeats span residues 1-31, 35-66, 69-99, 103-132, 137-167, 171-201, 205-235, 239-268, and 271-300; these read MALEQALQAARRGDLDVLRSLHAAGLLGPSL, LDALPVHHAARSGKLHCLRYLVEEVALPAVSR, NGATPAHDAAATGYLSCLQWLLTQGGCRVQE, SGATVLHLAARFGHPDVVKWLLYQGGANSA, TGALPIHYAAAKGDLPSLKLLVGHYPEGVNA, NGATPLYLACQEGHLEVTKYLVQECSADPHL, DGMTPLHAAAQMGHNPVLVWLVSFADVSFSE, DGATAMHFAASRGHTKVLSWLLLHGAEISQ, and WGGTPLHDAAENGELECCQILAVNGAGLDV. Residues serine 338 and serine 342 each carry the phosphoserine modification. 4 disordered regions span residues 349 to 400, 416 to 469, 493 to 750, and 819 to 850; these read QLDS…RGIP, PEKS…VGLH, KVEL…APGV, and EREQKRKEEERQKLEEIQRAKEQSEKLRTLGY. Residues 352–365 show a composition bias toward polar residues; it reads SGMSSPNTTMSVQP. Over residues 377–395 the composition is skewed to low complexity; it reads FSNYDSCSSSHSSSKGQRS. Pro residues predominate over residues 428–465; sequence PSPPPPPPPPPPSFPPPPPPTGTQPPPPPPGYPAPNPP. Residues serine 517, serine 524, and serine 556 each carry the phosphoserine modification. A compositionally biased stretch (basic and acidic residues) spans 522-548; the sequence is QDSELLHRQELLRHSTGLRRQDSDRKQ. Pro residues predominate over residues 606–629; sequence LPPPPPPPPLPEALSSPPPAPPLP. Composition is skewed to polar residues over residues 659–670 and 685–707; these read KSFNMMSPTGDN and PTPQSKGLTTVFSGSGQPASQPE. Phosphoserine is present on serine 665. The region spanning 669–686 is the WH2 domain; it reads DNSELLAEIKAGKSLKPT. A phosphoserine mark is found at serine 704, serine 708, and serine 714. A coiled-coil region spans residues 772–848; sequence KRQVMVRKLQ…KEQSEKLRTL (77 aa).

Monomer. Binds F-actin in a Ca(2+)-resistant fashion. Interacts (via N-terminus) with BAIAP2 (via SH3-domain). Interacts with PFN2. Interacts with MYO3A (via C-terminus). Interacts with MYO3B (via C-terminus). Expressed at high concentration in the microvillar parallel actin bundle (PAB) of hair cells stereocilia in the cochlea and vestibular system. Detected also at high levels of a number of other sensory cell types, including taste receptor cells, solitary chemoreceptor cells, vomeronasal sensory neurons and Merkel cells. Isoforms 2, 3, 4 and 5 are expressed in Purkinje cells dendritic spines. Expressed in utricle hair bundles (at protein level).

Its subcellular location is the cytoplasm. It localises to the cytoskeleton. It is found in the cell projection. The protein localises to the stereocilium. The protein resides in the microvillus. Its subcellular location is the cell junction. It localises to the dendritic spine. Its function is as follows. Multifunctional actin-bundling protein. Plays a major role in regulating the organization, dimension, dynamics and signaling capacities of the actin filament-rich microvilli in the mechanosensory and chemosensory cells. Required for the assembly and stabilization of the stereociliary parallel actin bundles. Plays a crucial role in the formation and maintenance of inner ear hair cell stereocilia. Involved in the elongation of actin in stereocilia. In extrastriolar hair cells, required for targeting MYO3B to stereocilia tips, and for regulation of stereocilia diameter and staircase formation. The sequence is that of Espin (Espn) from Mus musculus (Mouse).